Consider the following 471-residue polypeptide: Phosphoglycerate kinase (471 aa).

Substrate contacts are provided by residues 24-26 (DFN), Arg41, 64-67 (HLSR), Arg127, and Arg169. ATP is bound by residues Lys220, Gly307, Glu338, and 368-371 (GGDS). Residues 417-471 (KVEAVKEKTTTTTESASKEKSSTAKTASKPATSKTTAAKKPAEKKPAAKKPAAKK) form a disordered region. Positions 439–455 (TAKTASKPATSKTTAAK) are enriched in low complexity.

This sequence belongs to the phosphoglycerate kinase family. Monomer.

The protein localises to the cytoplasm. The enzyme catalyses (2R)-3-phosphoglycerate + ATP = (2R)-3-phospho-glyceroyl phosphate + ADP. Its pathway is carbohydrate degradation; glycolysis; pyruvate from D-glyceraldehyde 3-phosphate: step 2/5. The chain is Phosphoglycerate kinase from Malacoplasma penetrans (strain HF-2) (Mycoplasma penetrans).